The chain runs to 497 residues: MSQAGSSPLYAAIDLGSNSFHMLVVRHIDGSVQTMAKIKRKVRLAAGLDEHNSLSMEAMQRGWDCLSLFAERLQDIPKQNIRIVGTATLRTATNVDVFLEKANQILGQPIEVITGEEEAATIYKGVAHTSGGSGRRLVVDIGGASTELIIGEGFEAKALTSLKMGCVTWLENFFKDRQLNARNFDAAIEGAKQTLMPILGQYTDLGWDVCVGASGTVQALQEIMLAQGMDEVITHSKLKRLQKQAMLADHLEELDIEGLTLERALVFPSGLSILIAIFEQLEIDAMTLAGGALREGLVYEMVDELRQNDIRARTIRSVQNRYQLDCQYGEQVAKLAGKLLEQVGGEAWVAEPQGKVLLKTTAKLHEIGLTIDFKKGGEHSAYLLQHLDLPGYTRAQKFFIGEIARRYREQLTSLPEQHALSGTSGKRVLRLLRLAVLLSHRRNPDLEPCVTLTAEGDKLTLSIDAKWLEANPLTAAELEIESNRQTDIGWPLSIVTC.

Belongs to the GppA/Ppx family. GppA subfamily.

It catalyses the reaction guanosine 3'-diphosphate 5'-triphosphate + H2O = guanosine 3',5'-bis(diphosphate) + phosphate + H(+). It functions in the pathway purine metabolism; ppGpp biosynthesis; ppGpp from GTP: step 2/2. In terms of biological role, catalyzes the conversion of pppGpp to ppGpp. Guanosine pentaphosphate (pppGpp) is a cytoplasmic signaling molecule which together with ppGpp controls the 'stringent response', an adaptive process that allows bacteria to respond to amino acid starvation, resulting in the coordinated regulation of numerous cellular activities. This is Guanosine-5'-triphosphate,3'-diphosphate pyrophosphatase from Vibrio campbellii (strain ATCC BAA-1116).